A 321-amino-acid chain; its full sequence is Phospho-N-acetylmuramoyl-pentapeptide-transferase (321 aa).

10 helical membrane-spanning segments follow: residues 1 to 21, 50 to 70, 76 to 96, 112 to 132, 140 to 160, 176 to 196, 200 to 220, 225 to 245, 250 to 270, and 300 to 320; these read MIFV…PVLI, MGGL…IIFV, IILL…DDYI, FLAQ…FHLV, IPFT…IVFW, GLAT…SFVL, AIGI…PYNI, VFMG…ISIM, LSLI…MLQV, and VVTV…WIGV.

Belongs to the glycosyltransferase 4 family. MraY subfamily. Mg(2+) is required as a cofactor.

It localises to the cell membrane. It catalyses the reaction UDP-N-acetyl-alpha-D-muramoyl-L-alanyl-gamma-D-glutamyl-L-lysyl-D-alanyl-D-alanine + di-trans,octa-cis-undecaprenyl phosphate = Mur2Ac(oyl-L-Ala-gamma-D-Glu-L-Lys-D-Ala-D-Ala)-di-trans,octa-cis-undecaprenyl diphosphate + UMP. The protein operates within cell wall biogenesis; peptidoglycan biosynthesis. Functionally, catalyzes the initial step of the lipid cycle reactions in the biosynthesis of the cell wall peptidoglycan: transfers peptidoglycan precursor phospho-MurNAc-pentapeptide from UDP-MurNAc-pentapeptide onto the lipid carrier undecaprenyl phosphate, yielding undecaprenyl-pyrophosphoryl-MurNAc-pentapeptide, known as lipid I. This is Phospho-N-acetylmuramoyl-pentapeptide-transferase from Staphylococcus aureus (strain Mu50 / ATCC 700699).